We begin with the raw amino-acid sequence, 567 residues long: 2-succinyl-5-enolpyruvyl-6-hydroxy-3-cyclohexene-1-carboxylate synthase (567 aa).

This sequence belongs to the TPP enzyme family. MenD subfamily. In terms of assembly, homodimer. Mg(2+) is required as a cofactor. Mn(2+) serves as cofactor. Requires thiamine diphosphate as cofactor.

It catalyses the reaction isochorismate + 2-oxoglutarate + H(+) = 5-enolpyruvoyl-6-hydroxy-2-succinyl-cyclohex-3-ene-1-carboxylate + CO2. It functions in the pathway quinol/quinone metabolism; 1,4-dihydroxy-2-naphthoate biosynthesis; 1,4-dihydroxy-2-naphthoate from chorismate: step 2/7. Its pathway is quinol/quinone metabolism; menaquinone biosynthesis. Functionally, catalyzes the thiamine diphosphate-dependent decarboxylation of 2-oxoglutarate and the subsequent addition of the resulting succinic semialdehyde-thiamine pyrophosphate anion to isochorismate to yield 2-succinyl-5-enolpyruvyl-6-hydroxy-3-cyclohexene-1-carboxylate (SEPHCHC). The chain is 2-succinyl-5-enolpyruvyl-6-hydroxy-3-cyclohexene-1-carboxylate synthase from Yersinia pestis bv. Antiqua (strain Antiqua).